A 125-amino-acid chain; its full sequence is Small ribosomal subunit protein bS6 (125 aa).

Residues 96–125 (VTEASPMKAAKEERKPLAEVENNDFEDAEE) are disordered. Positions 104–113 (AAKEERKPLA) are enriched in basic and acidic residues. The span at 116-125 (ENNDFEDAEE) shows a compositional bias: acidic residues.

The protein belongs to the bacterial ribosomal protein bS6 family.

In terms of biological role, binds together with bS18 to 16S ribosomal RNA. The sequence is that of Small ribosomal subunit protein bS6 from Haemophilus influenzae (strain 86-028NP).